Consider the following 337-residue polypeptide: uncharacterized protein (337 aa).

Acidic residues predominate over residues Met-1–Gly-11. Positions Met-1–Arg-20 are disordered. Position 2 is an N-acetylserine (Ser-2). Residues Ala-50–Gly-130 adopt a coiled-coil conformation. The disordered stretch occupies residues Leu-139–Ser-242. Low complexity predominate over residues Ser-170–Glu-182. The span at Leu-197–Arg-211 shows a compositional bias: polar residues. The residue at position 213 (Thr-213) is a Phosphothreonine. Ser-217 bears the Phosphoserine mark. The segment covering Ala-223 to Pro-233 has biased composition (polar residues). Thr-226 carries the phosphothreonine modification. Position 235 is a phosphoserine (Ser-235).

This is an uncharacterized protein from Arabidopsis thaliana (Mouse-ear cress).